Consider the following 967-residue polypeptide: uncharacterized protein (967 aa).

Disordered stretches follow at residues 1 to 23 (MQNA…FHDR) and 41 to 72 (FTMH…DPRT). Residues 14 to 23 (KGRDVNFHDR) show a composition bias toward basic and acidic residues. Positions 60-72 (RLSNYSSAVDPRT) are enriched in polar residues. Ser-86 carries the post-translational modification Phosphoserine. 5 disordered regions span residues 135-259 (AVSE…QHLP), 271-296 (SVSR…SPPE), 380-399 (DSTT…APHK), 437-464 (HSYG…FVAD), and 499-544 (GTRF…KSLS). The segment covering 162–187 (ESSTSNNLETGNSTNTALHNVSSPLE) has biased composition (polar residues). Over residues 205-218 (HDLDEVISEKDTSL) the composition is skewed to basic and acidic residues. Positions 221–234 (RSSRGRSSAPKRRK) are enriched in basic residues. Residues 278 to 294 (SPASTPRSSVSSVSSSP) show a composition bias toward low complexity. Positions 382 to 394 (TTEYVNTESSSKT) are enriched in polar residues. The span at 499-508 (GTRFHSRSSH) shows a compositional bias: basic residues. Ser-585 carries the post-translational modification Phosphoserine. 2 disordered regions span residues 594 to 665 (ESNE…SVND) and 681 to 708 (DHRI…ESQH). Residues 608 to 622 (YDSRESTGHTIKELR) are compositionally biased toward basic and acidic residues. A compositionally biased stretch (low complexity) spans 686–704 (ASDNQNNNNNDANALAENS). Residue 728-736 (PCVLDVKMG) coordinates substrate.

It belongs to the inositol phosphokinase (IPK) family.

Its subcellular location is the cytoplasm. This is an uncharacterized protein from Schizosaccharomyces pombe (strain 972 / ATCC 24843) (Fission yeast).